The following is a 136-amino-acid chain: Nucleoside diphosphate kinase (136 aa).

ATP-binding residues include Lys10, Phe58, Arg86, Thr92, Arg104, and Asn114. Catalysis depends on His117, which acts as the Pros-phosphohistidine intermediate.

This sequence belongs to the NDK family. As to quaternary structure, homotetramer. Mg(2+) serves as cofactor.

The protein resides in the cytoplasm. The enzyme catalyses a 2'-deoxyribonucleoside 5'-diphosphate + ATP = a 2'-deoxyribonucleoside 5'-triphosphate + ADP. The catalysed reaction is a ribonucleoside 5'-diphosphate + ATP = a ribonucleoside 5'-triphosphate + ADP. Functionally, major role in the synthesis of nucleoside triphosphates other than ATP. The ATP gamma phosphate is transferred to the NDP beta phosphate via a ping-pong mechanism, using a phosphorylated active-site intermediate. In Mycobacterium leprae (strain TN), this protein is Nucleoside diphosphate kinase.